We begin with the raw amino-acid sequence, 963 residues long: Vacuolar membrane protease (963 aa).

Residues 1-15 (MVSSRRGFNPIAFTP) lie on the Cytoplasmic side of the membrane. The chain crosses the membrane as a helical span at residues 16–36 (WPVTILTSLVYLALIIPIIVV). Over 37–391 (HHLVPPAPKQ…FQLNTLFGLS (355 aa)) the chain is Vacuolar. N-linked (GlcNAc...) asparagine glycosylation is found at Asn-111 and Asn-114. Zn(2+) is bound by residues His-170 and Asp-182. The Proton acceptor role is filled by Glu-216. Zn(2+) contacts are provided by Glu-217, Glu-242, and His-315. Residues 392–412 (VALLVVAPLLLILTSVALFAV) traverse the membrane as a helical segment. The Cytoplasmic segment spans residues 413–441 (DKMYMFSMYTYLSESGGQVSLYGLRGMFR). The helical transmembrane segment at 442–462 (FPLILGISTALTVALAFLIMK) threads the bilayer. Residues 463–473 (VNPFIIYSSPY) lie on the Vacuolar side of the membrane. A helical transmembrane segment spans residues 474–494 (AVWSMMLSTCMFFAWFISCVA). Residues 495-504 (DFARPSALHR) lie on the Cytoplasmic side of the membrane. The helical transmembrane segment at 505–525 (AYAFSWMFGILWVFLVIATVY) threads the bilayer. The Vacuolar segment spans residues 526–535 (QRQHGIASSY). The helical transmembrane segment at 536-556 (FIVFYFAGVSVATWISYLELF) threads the bilayer. The Cytoplasmic segment spans residues 557–668 (GLSTTQDYAR…WSIYLVSSAW (112 aa)). A disordered region spans residues 569–618 (SRLSDRTPSSDSHLLAPSADELPSSGSVAGRDFNPEDVEDEEPTESTSLL). Acidic residues predominate over residues 603–612 (PEDVEDEEPT). The helical transmembrane segment at 669-689 (ILQFLLVAPIVLILLGQLGLF) threads the bilayer. At 690-705 (LTSATYQIGADGGSQF) the chain is on the vacuolar side. The helical transmembrane segment at 706 to 726 (IIYIGIAVLSVLILLPLFPFI) threads the bilayer. Residues 727–732 (HRFTYH) lie on the Cytoplasmic side of the membrane. The chain crosses the membrane as a helical span at residues 733 to 753 (IPTFMLFVLIGTLVYNLTAFP). Topologically, residues 754–963 (FSHNSRLKVA…LVEGSYSFKL (210 aa)) are vacuolar. Residue Asn-835 is glycosylated (N-linked (GlcNAc...) asparagine).

The protein belongs to the peptidase M28 family. Zn(2+) is required as a cofactor.

Its subcellular location is the vacuole membrane. Its function is as follows. May be involved in vacuolar sorting and osmoregulation. This chain is Vacuolar membrane protease, found in Arthroderma gypseum (strain ATCC MYA-4604 / CBS 118893) (Microsporum gypseum).